Reading from the N-terminus, the 337-residue chain is Glyceraldehyde-3-phosphate dehydrogenase 2 (337 aa).

NADP(+) is bound by residues 11–12 (RI), Asp35, Arg80, and Thr122. D-glyceraldehyde 3-phosphate-binding positions include 153–155 (SCT), Thr184, Arg199, 212–213 (TG), and Arg235. The Nucleophile role is filled by Cys154. An NADP(+)-binding site is contributed by Asn317.

It belongs to the glyceraldehyde-3-phosphate dehydrogenase family. In terms of assembly, homotetramer.

The protein localises to the cytoplasm. The catalysed reaction is D-glyceraldehyde 3-phosphate + phosphate + NADP(+) = (2R)-3-phospho-glyceroyl phosphate + NADPH + H(+). The enzyme catalyses D-glyceraldehyde 3-phosphate + phosphate + NAD(+) = (2R)-3-phospho-glyceroyl phosphate + NADH + H(+). Its pathway is carbohydrate biosynthesis; Calvin cycle. Functionally, gap2 has a major role in carbon fixation as a component of the Calvin cycle. Catalyzes the oxidative phosphorylation of glyceraldehyde 3-phosphate (G3P) to 1,3-bisphosphoglycerate (BPG) using the cofactor NAD. The first reaction step involves the formation of a hemiacetal intermediate between G3P and a cysteine residue, and this hemiacetal intermediate is then oxidized to a thioester, with concomitant reduction of NAD to NADH. The reduced NADH is then exchanged with the second NAD, and the thioester is attacked by a nucleophilic inorganic phosphate to produce BPG. The sequence is that of Glyceraldehyde-3-phosphate dehydrogenase 2 (gap2) from Trichormus variabilis (strain ATCC 29413 / PCC 7937) (Anabaena variabilis).